Consider the following 407-residue polypeptide: Endo-1,4-beta-xylanase D (407 aa).

A signal peptide spans 1-19; sequence MTLVKSILLALAAGHVAQA. The 314-residue stretch at 20 to 333 folds into the GH10 domain; the sequence is QLNTAAKAAG…KPAYYGILAG (314 aa). A glycan (N-linked (GlcNAc...) asparagine) is linked at Asn118. Glu148 functions as the Proton donor in the catalytic mechanism. The active-site Nucleophile is the Glu255. A disulfide bond links Cys283 and Cys289. Positions 337-364 are disordered; the sequence is GSGSSSSTSSTTLITTTTPTASSSTTSA. Residues 371–407 enclose the CBM1 domain; that stretch reads SGAAHWGQCGGIGWSGPTICVSPYTCQVLNPYYSQCL.

This sequence belongs to the glycosyl hydrolase 10 (cellulase F) family.

Its subcellular location is the secreted. The catalysed reaction is Endohydrolysis of (1-&gt;4)-beta-D-xylosidic linkages in xylans.. The protein operates within glycan degradation; xylan degradation. Its activity is regulated as follows. Inhibited by wheat xylanase inhibiting protein I (XIP-I). Functionally, endo-1,4-beta-xylanase involved in the hydrolysis of xylan, a major structural heterogeneous polysaccharide found in plant biomass representing the second most abundant polysaccharide in the biosphere, after cellulose. Shows an endo-mode of action on xylan forming mainly xylobiose and short-chain xylooligosaccharides (XOS). The protein is Endo-1,4-beta-xylanase D (xynD) of Talaromyces funiculosus (Fruitlet core rot fungus).